A 580-amino-acid chain; its full sequence is PX domain-containing protein kinase-like protein (580 aa).

The PX domain maps to 14–126 (LDDTVPLTAA…KFLDPNNYSA (113 aa)). Residues 88–481 (FIAERQKGLQ…VENSEEQPVK (394 aa)) enclose the Protein kinase domain. Residues 433–551 (EQKQIHQHRR…LPQAVNGVNR (119 aa)) are disordered. 2 stretches are compositionally biased toward basic residues: residues 437–448 (IHQHRRLTRAQS) and 457–469 (KRRKILARKKSKR). Residues 483–514 (SNANNSAGSGASSPLTSPSSPTPPSTAGLSSA) show a composition bias toward low complexity. Residues 515–531 (LPPPPPPPPPPPPPAGP) are compositionally biased toward pro residues. Residues 549-568 (VNRGALLSSIQNFQKGTLRK) enclose the WH2 domain.

This sequence belongs to the protein kinase superfamily.

The protein localises to the cytoplasm. The protein resides in the cell membrane. Functionally, binds to and modulates brain Na,K-ATPase subunits ATP1B1 and ATP1B3 and may thereby participate in the regulation of electrical excitability and synaptic transmission. May not display kinase activity. This Rattus norvegicus (Rat) protein is PX domain-containing protein kinase-like protein.